We begin with the raw amino-acid sequence, 382 residues long: Quinolinate synthase (382 aa).

Residues histidine 63 and serine 84 each coordinate iminosuccinate. Cysteine 129 provides a ligand contact to [4Fe-4S] cluster. Residues 155–157 and serine 172 contribute to the iminosuccinate site; that span reads YAN. Cysteine 216 contacts [4Fe-4S] cluster. Iminosuccinate is bound by residues 242-244 and threonine 259; that span reads HPE. Residue cysteine 313 coordinates [4Fe-4S] cluster.

The protein belongs to the quinolinate synthase family. Type 1 subfamily. Requires [4Fe-4S] cluster as cofactor.

The protein resides in the cytoplasm. The catalysed reaction is iminosuccinate + dihydroxyacetone phosphate = quinolinate + phosphate + 2 H2O + H(+). It participates in cofactor biosynthesis; NAD(+) biosynthesis; quinolinate from iminoaspartate: step 1/1. Its function is as follows. Catalyzes the condensation of iminoaspartate with dihydroxyacetone phosphate to form quinolinate. This Ralstonia pickettii (strain 12J) protein is Quinolinate synthase.